The following is a 526-amino-acid chain: Ferrochelatase-2, chloroplastic (526 aa).

The protein belongs to the ferrochelatase family.

It is found in the plastid. It localises to the chloroplast. It carries out the reaction heme b + 2 H(+) = protoporphyrin IX + Fe(2+). It participates in porphyrin-containing compound metabolism; protoheme biosynthesis; protoheme from protoporphyrin-IX: step 1/1. Catalyzes the ferrous insertion into protoporphyrin IX. This Oryza sativa subsp. japonica (Rice) protein is Ferrochelatase-2, chloroplastic.